Here is a 366-residue protein sequence, read N- to C-terminus: Elongation factor Ts, mitochondrial (366 aa).

The transit peptide at 1-50 (MAWSQSARKPMIGLLFRAQQHSARGYSYSAFQAHLSSSNVDQSATLLRRF) directs the protein to the mitochondrion.

The protein belongs to the EF-Ts family.

Its subcellular location is the mitochondrion. Associates with the EF-Tu.GDP complex and induces the exchange of GDP to GTP. It remains bound to the aminoacyl-tRNA.EF-Tu.GTP complex up to the GTP hydrolysis stage on the ribosome. In Oryza sativa subsp. japonica (Rice), this protein is Elongation factor Ts, mitochondrial.